The sequence spans 162 residues: NADH-quinone oxidoreductase subunit C (162 aa).

Belongs to the complex I 30 kDa subunit family. NDH-1 is composed of 14 different subunits. Subunits NuoB, C, D, E, F, and G constitute the peripheral sector of the complex.

The protein localises to the cell inner membrane. It catalyses the reaction a quinone + NADH + 5 H(+)(in) = a quinol + NAD(+) + 4 H(+)(out). Functionally, NDH-1 shuttles electrons from NADH, via FMN and iron-sulfur (Fe-S) centers, to quinones in the respiratory chain. The immediate electron acceptor for the enzyme in this species is believed to be ubiquinone. Couples the redox reaction to proton translocation (for every two electrons transferred, four hydrogen ions are translocated across the cytoplasmic membrane), and thus conserves the redox energy in a proton gradient. The sequence is that of NADH-quinone oxidoreductase subunit C from Geobacter sulfurreducens (strain ATCC 51573 / DSM 12127 / PCA).